The following is a 396-amino-acid chain: Tryptophan synthase beta chain (396 aa).

At K88 the chain carries N6-(pyridoxal phosphate)lysine.

It belongs to the TrpB family. Tetramer of two alpha and two beta chains. Pyridoxal 5'-phosphate is required as a cofactor.

The enzyme catalyses (1S,2R)-1-C-(indol-3-yl)glycerol 3-phosphate + L-serine = D-glyceraldehyde 3-phosphate + L-tryptophan + H2O. It functions in the pathway amino-acid biosynthesis; L-tryptophan biosynthesis; L-tryptophan from chorismate: step 5/5. Its function is as follows. The beta subunit is responsible for the synthesis of L-tryptophan from indole and L-serine. This is Tryptophan synthase beta chain from Actinobacillus pleuropneumoniae serotype 7 (strain AP76).